The following is an 891-amino-acid chain: DNA mismatch repair protein MutS (891 aa).

617–624 (GPNMSGKS) serves as a coordination point for ATP. The segment covering 805–827 (REKIEEEEPKTKDTKRGPSEKVK) has biased composition (basic and acidic residues). Residues 805–840 (REKIEEEEPKTKDTKRGPSEKVKNASPTLPRDEKGR) form a disordered region.

It belongs to the DNA mismatch repair MutS family.

Its function is as follows. This protein is involved in the repair of mismatches in DNA. It is possible that it carries out the mismatch recognition step. This protein has a weak ATPase activity. This is DNA mismatch repair protein MutS from Porphyromonas gingivalis (strain ATCC BAA-308 / W83).